The primary structure comprises 197 residues: TM2 domain-containing protein 1 (197 aa).

Residues 1–32 (MAFRWRSLMRFRSTTRLLLLFTFCLTVIHSLG) form the signal peptide. Residues 33 to 105 (NDVDSCDKLH…GFNKTIPCRN (73 aa)) are Extracellular-facing. N-linked (GlcNAc...) asparagine glycans are attached at residues Asn77, Asn84, Asn98, and Asn105. Residues 106 to 126 (VSGYSYKVAVALSLFLGWIGA) form a helical membrane-spanning segment. The TM2 domain occupies 108 to 155 (GYSYKVAVALSLFLGWIGADRFYLGYPALGLLKFCTVGFCGIGSLVDF). The Cytoplasmic segment spans residues 127–143 (DRFYLGYPALGLLKFCT). The helical transmembrane segment at 144-164 (VGFCGIGSLVDFMLISMQIVG) threads the bilayer. Residues 165-197 (PSDGSDYIVDYYGARLTRLSITNETYRRMQPSP) are Extracellular-facing. Residue Asn187 is glycosylated (N-linked (GlcNAc...) asparagine).

It belongs to the TM2 family.

The protein resides in the membrane. This is TM2 domain-containing protein 1 (tm2d1) from Danio rerio (Zebrafish).